Here is a 138-residue protein sequence, read N- to C-terminus: Transcription antitermination protein NusB (138 aa).

The protein belongs to the NusB family.

Its function is as follows. Involved in transcription antitermination. Required for transcription of ribosomal RNA (rRNA) genes. Binds specifically to the boxA antiterminator sequence of the ribosomal RNA (rrn) operons. The sequence is that of Transcription antitermination protein NusB from Helicobacter pylori (strain ATCC 700392 / 26695) (Campylobacter pylori).